Reading from the N-terminus, the 259-residue chain is Protein unc-50 homolog A (259 aa).

Over 1–82 (MLPTTSVSPR…TKDQWARDDP (82 aa)) the chain is Cytoplasmic. Residues 83 to 103 (AFLVLLSIWLCVSTVGFGFVL) form a helical membrane-spanning segment. Topologically, residues 104–112 (DMSFFETFK) are lumenal. A helical transmembrane segment spans residues 113 to 133 (LLLWVVFIDCVGVGLLIATLM). The Cytoplasmic portion of the chain corresponds to 134–158 (WFVSNKYMVKRQGKDYDVEWGYTFD). The chain crosses the membrane as a helical span at residues 159 to 179 (VHLNAFYPLLVILHFIQLFFI). The Lumenal portion of the chain corresponds to 180–181 (NH). A helical transmembrane segment spans residues 182–202 (VILSGWFIGYFVGNTIWLIAI). Residues 203 to 222 (GYYIYITFLGYSALPFLKNT) are Cytoplasmic-facing. A helical transmembrane segment spans residues 223–243 (VILLYPFAALALLYVLSLALG). The Lumenal segment spans residues 244–259 (WNFTEKLCLFYKYRVR).

The protein belongs to the unc-50 family.

It localises to the nucleus inner membrane. The protein localises to the golgi apparatus membrane. Its function is as follows. Involved in the cell surface expression of neuronal nicotinic receptors. Binds RNA. This chain is Protein unc-50 homolog A (unc50-a), found in Xenopus laevis (African clawed frog).